The sequence spans 390 residues: Scoulerine-9-O-methyltransferase 1 (390 aa).

E153 serves as a coordination point for substrate. S-adenosyl-L-methionine contacts are provided by residues M207, S211, G235, D258, 278–279, and K292; that span reads DM. H296 acts as the Proton acceptor in catalysis. A substrate-binding site is contributed by 296–297; that stretch reads HD.

It belongs to the class I-like SAM-binding methyltransferase superfamily. Cation-independent O-methyltransferase family. COMT subfamily. In terms of assembly, homodimer. As to expression, highly expressed in capsules. Expressed is stems. Expressed at low levels in roots.

It catalyses the reaction (S)-scoulerine + S-adenosyl-L-methionine = (S)-tetrahydrocolumbamine + S-adenosyl-L-homocysteine + H(+). The catalysed reaction is (S)-tetrahydrocolumbamine + S-adenosyl-L-methionine = (S)-tetrahydropalmatine + S-adenosyl-L-homocysteine + H(+). The enzyme catalyses (S)-norreticuline + S-adenosyl-L-methionine = (S)-norcodamine + S-adenosyl-L-homocysteine + H(+). It carries out the reaction (S)-reticuline + S-adenosyl-L-methionine = (S)-codamine + S-adenosyl-L-homocysteine + H(+). Its pathway is alkaloid biosynthesis. In terms of biological role, methyltransferase involved in the biosynthesis of the benzylisoquinoline alkaloid noscapine. Catalyzes the conversion of (S)-scoulerine to (S)-tetrahydrocolumbamine. Can convert (S)-tetrahydrocolumbamine to tetrahydropalmatine. Can convert (S)-norreticuline to (S)-norcodamine. Can convert (S)-reticuline to (S)-codamine. Substrate preference is (S)-scoulerine &gt; (S)-tetrahydrocolumbamine &gt; (S)-norreticuline &gt; (S)-reticuline. This is Scoulerine-9-O-methyltransferase 1 from Papaver somniferum (Opium poppy).